The chain runs to 560 residues: MDIKRTILIAALAVVSYVMVLKWNDDYGQAALPTQNTAASTVAPGLPDGVPAGNNGASADVPSANAESSPAELAPVALSKDLIRVKTDVLELAIDPVGGDIVQLNLPKYPRRQDHPDIPFQLFDNGGERVYLAQSGLTGANGPDARASGRPLYAAEQKSYQLADGQEQLVVDLKFSDNGVNYIKRFSFKRGEYDLNVSYLIDNQSGQAWSGNMFAQLKRDASGDPSSSTATGTATYLGAALWTASEPYKKVSMKDIDKGGLKENVSGGWVAWLQHYFVTAWIPAKSDNNVVQTRKDSQGNYIIGYTGPVISVPAGGKVETSAMLYAGPKIQSKLKELSPGLELTVDYGFLWFIAQPIFWLLQHIHSLLGNWGWSIIVLTMLIKGLFFPLSAASYRSMARMRAVAPKLAALKERFGDDRQKMSQAMMELYKKEKINPLGGCLPILVQMPVFLALYWVLLESVEMRQAPWMLWITDLSIKDPFFILPIIMGATMFIQQRLNPTPPDPMQAKVMKMMPIIFTFFFLWFPAGLVLYWVVNNCLSISQQWYITRRIEAATKKAAA.

A helical transmembrane segment spans residues 1-21; that stretch reads MDIKRTILIAALAVVSYVMVL. The segment at 42–66 is disordered; it reads VAPGLPDGVPAGNNGASADVPSANA. A run of 5 helical transmembrane segments spans residues 341-361, 367-387, 437-457, 468-488, and 515-535; these read LELTVDYGFLWFIAQPIFWLL, LLGNWGWSIIVLTMLIKGLFF, LGGCLPILVQMPVFLALYWVL, WMLWITDLSIKDPFFILPIIM, and PIIFTFFFLWFPAGLVLYWVV.

Belongs to the OXA1/ALB3/YidC family. Type 1 subfamily. Interacts with the Sec translocase complex via SecD. Specifically interacts with transmembrane segments of nascent integral membrane proteins during membrane integration.

It is found in the cell inner membrane. Functionally, required for the insertion and/or proper folding and/or complex formation of integral membrane proteins into the membrane. Involved in integration of membrane proteins that insert both dependently and independently of the Sec translocase complex, as well as at least some lipoproteins. Aids folding of multispanning membrane proteins. The sequence is that of Membrane protein insertase YidC from Pseudomonas putida (strain GB-1).